Consider the following 1479-residue polypeptide: DNA-directed RNA polymerase subunit beta'' (1479 aa).

Zn(2+)-binding residues include C220, C296, C303, and C306. Disordered stretches follow at residues 618–640 (TRAEDSEEEYETLEDEYRTREDE) and 663–756 (LEDE…KKEG). Composition is skewed to acidic residues over residues 622–631 (DSEEEYETLE), 704–717 (DEYGTIEEDSEDEY), and 731–749 (LEEDSEEDSEDEYESPEED).

This sequence belongs to the RNA polymerase beta' chain family. RpoC2 subfamily. In plastids the minimal PEP RNA polymerase catalytic core is composed of four subunits: alpha, beta, beta', and beta''. When a (nuclear-encoded) sigma factor is associated with the core the holoenzyme is formed, which can initiate transcription. Zn(2+) is required as a cofactor.

The protein resides in the plastid. It is found in the chloroplast. It carries out the reaction RNA(n) + a ribonucleoside 5'-triphosphate = RNA(n+1) + diphosphate. Its function is as follows. DNA-dependent RNA polymerase catalyzes the transcription of DNA into RNA using the four ribonucleoside triphosphates as substrates. The chain is DNA-directed RNA polymerase subunit beta'' from Triticum aestivum (Wheat).